The chain runs to 119 residues: Toxin ICK-8 (119 aa).

The signal sequence occupies residues 1–19; that stretch reads MMKLYSLVIIATLAAAAFA. Cystine bridges form between Cys-59–Cys-74, Cys-67–Cys-80, Cys-71–Cys-116, and Cys-73–Cys-87.

The protein belongs to the neurotoxin 25 family. ICK-8 subfamily. In terms of tissue distribution, expressed by the venom gland.

The protein localises to the secreted. In terms of biological role, ion channel inhibitor. This Trittame loki (Brush-footed trapdoor spider) protein is Toxin ICK-8.